The primary structure comprises 456 residues: Adenylosuccinate synthetase isozyme 2 (456 aa).

The segment covering 1-14 (MSISESSPAATSLP) has biased composition (polar residues). Positions 1–24 (MSISESSPAATSLPNGDCGRPRAR) are disordered. Residues 39–45 (GDEGKGK) and 67–69 (GHT) contribute to the GTP site. D40 serves as the catalytic Proton acceptor. The Mg(2+) site is built by D40 and G67. D40 contacts substrate. Residues 40–43 (DEGK), 65–68 (NAGH), T162, R176, N255, T270, and R334 each bind IMP. The active-site Proton donor is the H68. Substrate is bound at residue 330–336 (VTTGRKR). GTP contacts are provided by residues R336, 362-364 (KLD), and 444-447 (GVGK).

This sequence belongs to the adenylosuccinate synthetase family. As to quaternary structure, homodimer. Mg(2+) is required as a cofactor.

It is found in the cytoplasm. Its subcellular location is the mitochondrion. It catalyses the reaction IMP + L-aspartate + GTP = N(6)-(1,2-dicarboxyethyl)-AMP + GDP + phosphate + 2 H(+). The protein operates within purine metabolism; AMP biosynthesis via de novo pathway; AMP from IMP: step 1/2. Its activity is regulated as follows. Inhibited competitively by AMP and IMP and non-competitively by fructose 1,6-bisphosphate. Functionally, plays an important role in the de novo pathway and in the salvage pathway of purine nucleotide biosynthesis. Catalyzes the first committed step in the biosynthesis of AMP from IMP. The chain is Adenylosuccinate synthetase isozyme 2 (Adss2) from Mus musculus (Mouse).